Consider the following 217-residue polypeptide: GTP cyclohydrolase 1 (217 aa).

Cysteine 108, histidine 111, and cysteine 179 together coordinate Zn(2+).

The protein belongs to the GTP cyclohydrolase I family. In terms of assembly, toroid-shaped homodecamer, composed of two pentamers of five dimers.

It carries out the reaction GTP + H2O = 7,8-dihydroneopterin 3'-triphosphate + formate + H(+). The protein operates within cofactor biosynthesis; 7,8-dihydroneopterin triphosphate biosynthesis; 7,8-dihydroneopterin triphosphate from GTP: step 1/1. This Shewanella denitrificans (strain OS217 / ATCC BAA-1090 / DSM 15013) protein is GTP cyclohydrolase 1.